The chain runs to 480 residues: Bindin (480 aa).

Positions 1-20 (MDSQVLPLILLIIVFAASSA) are cleaved as a signal peptide. Residues 21–247 (HGHFPHRTNQ…GEMRAERQRR (227 aa)) constitute a propeptide that is removed on maturation. Positions 161–211 (AEMRHRRSAKDDDVNKRASPRKGSSPAGKKVQIMEQDAGKGDAHNEKEVVK) are disordered. A compositionally biased stretch (basic and acidic residues) spans 197–211 (DAGKGDAHNEKEVVK). The fucose-binding domain stretch occupies residues 377–385 (LRHLRHHSN). The chain crosses the membrane as a helical span at residues 431 to 451 (GAGAVAGAAMAAGMPPYPGGA). The disordered stretch occupies residues 452–480 (QGGMRVGGQPQNPMGGNAYNPMTGYRQQG).

This sequence belongs to the bindin family.

It localises to the cytoplasmic vesicle. The protein localises to the secretory vesicle. The protein resides in the acrosome membrane. Its function is as follows. Species-specific sea urchin sperm protein required for adhesion of sperm to the egg surface during fertilization. Bindin coats the acrosomal process after it is externalized by the acrosome reaction. It binds to sulfated, fucose-containing polysaccharides on the vitelline layer receptor proteoglycans which cover the egg plasma membrane. In Arbacia punctulata (Punctuate sea urchin), this protein is Bindin.